Reading from the N-terminus, the 878-residue chain is MTDMYASLRSNVGTLGQILGDTIRTHMDEPFLDKIEQIRHLAKSSRQGNDTAREQMLTLLAALPDEELVPFAKAFNQFLNLANIAEQFHTISRNCDELVCVPDPVDQLLGRMLNGRIDQDKMLECLQTLDIDLVLTAHPTEISRRTLIQKYSAVVDCLATMENPQLTEREKKQNHLRLRQLIAQIWHTNEIRHERPTPVDEARWGLSTIEASLWQAIPDFLRQLNEQVEERTGKQLPSDIAPIRFSSWMGGDRDGNPFVTAKVTQEVLDRNRHTAARLYLKDVVLLVNELSMEEANEELLALTDNSHEPYRVVLRELRQKLRDTIDYLNARLEGHSPEVDLDSLIWHEDDLKQPLTLLYRSLTESGMSLIANGLLLDMLRRLACFGIHMLRLDIRQDAQRHSDVIAELTRYLGLGDFDHWDEHEKQAFLLRELSGKRPLIPHNWEPSAEVAEVISTVRLIASQSPKALGSYVISMASQPSDVLTVLLLLKEAGCQHPMRVVPLFETLEDLNNAASCISALFAIDWYRGYCKGSQEVMIGYSDSAKDAGVMAAAWAQYSAQEKLVKVCNQADIKLTLFHGRGGTIGRGGGPAHKAILSQPPGSVDGRIRVTEQGEMIRFKFGLPKLAVQSLALYTSAVMEATLLPPPEPKPEWREAMERLASDSVTAYRAIVREEPDFVAYFRAATPEVELGKLPLGSRPAKRRVDGGIESLRAIPWIFAWSQNRLMLPAWLGAGEALQQAADRGELTLLREMEQQWPFFETRISMLEMVYAKAEPNLAKYYETCLVPQELHHLGEALRSRMATGIKVVLELTQSDALMSHTPWNRESVELRNPYIDPLNFLQAELLARTRKEQAGSSNVELALMLTIAGVAAGMRNTG.

Residues His138 and Lys545 contribute to the active site.

Belongs to the PEPCase type 1 family. It depends on Mg(2+) as a cofactor.

It carries out the reaction oxaloacetate + phosphate = phosphoenolpyruvate + hydrogencarbonate. Its function is as follows. Forms oxaloacetate, a four-carbon dicarboxylic acid source for the tricarboxylic acid cycle. The protein is Phosphoenolpyruvate carboxylase of Shewanella loihica (strain ATCC BAA-1088 / PV-4).